Reading from the N-terminus, the 193-residue chain is Recombination protein RecR (193 aa).

The segment at 61–76 adopts a C4-type zinc-finger fold; that stretch reads CSSCNALSESEVCEIC. The 87-residue stretch at 84–170 folds into the Toprim domain; sequence SQLCMVLHPR…TFTKIAQGVP (87 aa).

Belongs to the RecR family.

May play a role in DNA repair. It seems to be involved in an RecBC-independent recombinational process of DNA repair. It may act with RecF and RecO. This is Recombination protein RecR from Helicobacter pylori (strain P12).